The sequence spans 223 residues: NLP effector protein 2 (223 aa).

The short motif at 90 to 100 is the Conserved undecapeptide motif element; it reads AIMYSWYFPKD. Positions 107–113 match the Conserved p motif motif; sequence GHRHDWE.

The protein belongs to the Necrosis inducing protein (NPP1) family.

It localises to the secreted. The protein resides in the host cytoplasm. In terms of biological role, probable secreted effector that may act as a pathogen-associated molecular pattern (PAMP) recognized by the plant immune system. Seems not to induce necrosis, neither in several susceptible or resistant Vitis species nor in the dicot model plant Nicotiana benthamiana. In Plasmopara viticola (Downy mildew of grapevine), this protein is NLP effector protein 2.